The sequence spans 186 residues: Photosystem I assembly protein Ycf4 (186 aa).

Transmembrane regions (helical) follow at residues 22 to 42 (FCWA…GTSS) and 57 to 77 (IIFF…LFIS).

Belongs to the Ycf4 family.

It localises to the plastid. The protein localises to the chloroplast thylakoid membrane. Functionally, seems to be required for the assembly of the photosystem I complex. In Vitis vinifera (Grape), this protein is Photosystem I assembly protein Ycf4.